The sequence spans 317 residues: Melanocyte-stimulating hormone receptor (317 aa).

Residues 1–37 (MPVQGSQRRLLGSLNSTPTATPHLGLAANQTGARCLE) are Extracellular-facing. An N-linked (GlcNAc...) asparagine glycan is attached at N29. The chain crosses the membrane as a helical span at residues 38–63 (MSIPDGLFLSLGLVSLVENVLVVTAI). The Cytoplasmic segment spans residues 64–72 (AKNRNLHSP). A helical membrane pass occupies residues 73-93 (MYCFICCLALSDLLVSGSNML). Topologically, residues 94-118 (ETAVTLLLEAGALAARAAVVQQLDN) are extracellular. Residues 119–140 (VIDVITCSSMLSSLCFLGAIAV) form a helical membrane-spanning segment. Over 141–163 (DRYISIFYALRYHSIVTLPRARR) the chain is Cytoplasmic. The chain crosses the membrane as a helical span at residues 164–183 (AIAAIWVASVLCSTLFIAYY). At 184–191 (DHAAVLLC) the chain is on the extracellular side. The chain crosses the membrane as a helical span at residues 192–211 (LVVFFLAMLVLMAVLYVHML). The Cytoplasmic portion of the chain corresponds to 212 to 240 (ARACQHAQGIARLHKRQRLAHQGFGLKGA). Residues 241–266 (ATLTILLGIFFLCWGPFFLHLTLIVL) traverse the membrane as a helical segment. Residues 267 to 279 (CPQHPTCSCIFKN) lie on the Extracellular side of the membrane. Residues 280-300 (FNLFLTLIICNAIIDPLIYAF) form a helical membrane-spanning segment. The Cytoplasmic segment spans residues 301–317 (RSQELRRTLKEVLLCSW). C315 carries S-palmitoyl cysteine lipidation.

The protein belongs to the G-protein coupled receptor 1 family. Interacts with MGRN1, but does not undergo MGRN1-mediated ubiquitination; this interaction competes with GNAS-binding and thus inhibits agonist-induced cAMP production. Interacts with OPN3; the interaction results in a decrease in MC1R-mediated cAMP signaling and ultimately a decrease in melanin production in melanocytes.

Its subcellular location is the cell membrane. In terms of biological role, receptor for MSH (alpha, beta and gamma) and ACTH. The activity of this receptor is mediated by G proteins which activate adenylate cyclase. Mediates melanogenesis, the production of eumelanin (black/brown) and phaeomelanin (red/yellow), via regulation of cAMP signaling in melanocytes. The sequence is that of Melanocyte-stimulating hormone receptor (MC1R) from Macaca nemestrina (Pig-tailed macaque).